The primary structure comprises 382 residues: UDP-4-amino-4-deoxy-L-arabinose--oxoglutarate aminotransferase (382 aa).

An N6-(pyridoxal phosphate)lysine modification is found at K183.

Belongs to the DegT/DnrJ/EryC1 family. ArnB subfamily. In terms of assembly, homodimer. Requires pyridoxal 5'-phosphate as cofactor.

It catalyses the reaction UDP-4-amino-4-deoxy-beta-L-arabinose + 2-oxoglutarate = UDP-beta-L-threo-pentopyranos-4-ulose + L-glutamate. The protein operates within nucleotide-sugar biosynthesis; UDP-4-deoxy-4-formamido-beta-L-arabinose biosynthesis; UDP-4-deoxy-4-formamido-beta-L-arabinose from UDP-alpha-D-glucuronate: step 2/3. It functions in the pathway bacterial outer membrane biogenesis; lipopolysaccharide biosynthesis. Functionally, catalyzes the conversion of UDP-4-keto-arabinose (UDP-Ara4O) to UDP-4-amino-4-deoxy-L-arabinose (UDP-L-Ara4N). The modified arabinose is attached to lipid A and is required for resistance to polymyxin and cationic antimicrobial peptides. The chain is UDP-4-amino-4-deoxy-L-arabinose--oxoglutarate aminotransferase from Pseudomonas fluorescens (strain Pf0-1).